Consider the following 201-residue polypeptide: Protein MJ0810 (201 aa).

The AMMECR1 domain maps to E7 to E197.

The sequence is that of Protein MJ0810 from Methanocaldococcus jannaschii (strain ATCC 43067 / DSM 2661 / JAL-1 / JCM 10045 / NBRC 100440) (Methanococcus jannaschii).